A 446-amino-acid polypeptide reads, in one-letter code: Argininosuccinate synthase (446 aa).

ATP is bound by residues 17 to 25 (AFSGGLDTS) and Ala-43. Tyr-99 provides a ligand contact to L-citrulline. 2 residues coordinate ATP: Gly-129 and Thr-131. Positions 131, 135, and 136 each coordinate L-aspartate. Asn-135 serves as a coordination point for L-citrulline. Asp-136 provides a ligand contact to ATP. Arg-139 and Ser-192 together coordinate L-citrulline. Residue Asp-194 participates in ATP binding. L-citrulline is bound by residues Thr-201, Glu-203, and Glu-280.

Belongs to the argininosuccinate synthase family. Type 2 subfamily. In terms of assembly, homotetramer.

It is found in the cytoplasm. It carries out the reaction L-citrulline + L-aspartate + ATP = 2-(N(omega)-L-arginino)succinate + AMP + diphosphate + H(+). Its pathway is amino-acid biosynthesis; L-arginine biosynthesis; L-arginine from L-ornithine and carbamoyl phosphate: step 2/3. The polypeptide is Argininosuccinate synthase (Burkholderia mallei (strain NCTC 10247)).